Reading from the N-terminus, the 483-residue chain is Glutamyl-tRNA(Gln) amidotransferase subunit A (483 aa).

Catalysis depends on charge relay system residues Lys-75 and Ser-150. The Acyl-ester intermediate role is filled by Ser-174.

Belongs to the amidase family. GatA subfamily. As to quaternary structure, heterotrimer of A, B and C subunits.

It catalyses the reaction L-glutamyl-tRNA(Gln) + L-glutamine + ATP + H2O = L-glutaminyl-tRNA(Gln) + L-glutamate + ADP + phosphate + H(+). Its function is as follows. Allows the formation of correctly charged Gln-tRNA(Gln) through the transamidation of misacylated Glu-tRNA(Gln) in organisms which lack glutaminyl-tRNA synthetase. The reaction takes place in the presence of glutamine and ATP through an activated gamma-phospho-Glu-tRNA(Gln). The chain is Glutamyl-tRNA(Gln) amidotransferase subunit A from Deinococcus geothermalis (strain DSM 11300 / CIP 105573 / AG-3a).